Reading from the N-terminus, the 95-residue chain is Protein translocase subunit SecE (95 aa).

Residues 1-35 (MTDAVGSIDMPDAEDEAPESKKKSRKGGKRGKKGP) are disordered. Residues 22-35 (KKSRKGGKRGKKGP) show a composition bias toward basic residues. Residues 67–87 (VVIVFVVVMIGLVTVLDIGFA) traverse the membrane as a helical segment.

It belongs to the SecE/SEC61-gamma family. As to quaternary structure, component of the Sec protein translocase complex. Heterotrimer consisting of SecY, SecE and SecG subunits. The heterotrimers can form oligomers, although 1 heterotrimer is thought to be able to translocate proteins. Interacts with the ribosome. Interacts with SecDF, and other proteins may be involved. Interacts with SecA.

It is found in the cell membrane. Essential subunit of the Sec protein translocation channel SecYEG. Clamps together the 2 halves of SecY. May contact the channel plug during translocation. This is Protein translocase subunit SecE from Streptomyces griseus.